A 368-amino-acid polypeptide reads, in one-letter code: GTPase Obg (368 aa).

Residues 1 to 161 (MRFVDEATIT…RSLRLELKIL (161 aa)) enclose the Obg domain. The 176-residue stretch at 162 to 337 (ADAGLLGLPN…VVAEMWRMRD (176 aa)) folds into the OBG-type G domain. GTP-binding positions include 168 to 175 (GLPNAGKS), 193 to 197 (FTTLI), 217 to 220 (DIPG), 290 to 293 (NKID), and 318 to 320 (SAL). Residues Ser175 and Thr195 each coordinate Mg(2+).

The protein belongs to the TRAFAC class OBG-HflX-like GTPase superfamily. OBG GTPase family. In terms of assembly, monomer. It depends on Mg(2+) as a cofactor.

The protein localises to the cytoplasm. In terms of biological role, an essential GTPase which binds GTP, GDP and possibly (p)ppGpp with moderate affinity, with high nucleotide exchange rates and a fairly low GTP hydrolysis rate. Plays a role in control of the cell cycle, stress response, ribosome biogenesis and in those bacteria that undergo differentiation, in morphogenesis control. In Nitratidesulfovibrio vulgaris (strain DSM 19637 / Miyazaki F) (Desulfovibrio vulgaris), this protein is GTPase Obg.